The sequence spans 196 residues: MITVALIDDHLIVRSGFAQLLGLEPDLQVVAEFGSGREALAGLPGRGVQVCICDISMPDISGLELLSQLPKGMATIVLSVHDSPALVEQALNAGARGFLSKRCSPDELIAAVHTVATGGCYLTPDIAVKLAAGRQDPLTKRERQVAEKLAQGMAVKEIAAELGLSPKTVHVHRANLLEKLGVSNDVELAHRMFDGW.

One can recognise a Response regulatory domain in the interval 3 to 116 (TVALIDDHLI…ELIAAVHTVA (114 aa)). Residue Asp54 is modified to 4-aspartylphosphate. In terms of domain architecture, HTH luxR-type spans 131–196 (AAGRQDPLTK…ELAHRMFDGW (66 aa)). A DNA-binding region (H-T-H motif) is located at residues 155–174 (VKEIAAELGLSPKTVHVHRA).

Phosphorylated and dephosphorylated by UhpB.

Its subcellular location is the cytoplasm. Functionally, part of the UhpABC signaling cascade that controls the expression of the hexose phosphate transporter UhpT. Activates the transcription of the uhpT gene. Acts by binding specifically to the uhpT promoter region. The sequence is that of Transcriptional regulatory protein UhpA (uhpA) from Salmonella typhimurium (strain LT2 / SGSC1412 / ATCC 700720).